A 465-amino-acid polypeptide reads, in one-letter code: Ribulose bisphosphate carboxylase large chain (465 aa).

K4 carries the post-translational modification N6,N6,N6-trimethyllysine. Positions 113 and 163 each coordinate substrate. K165 functions as the Proton acceptor in the catalytic mechanism. Residue K167 coordinates substrate. Mg(2+)-binding residues include K191, D193, and E194. K191 bears the N6-carboxylysine mark. Residue H284 is the Proton acceptor of the active site. Substrate-binding residues include R285, H317, and S369.

The protein belongs to the RuBisCO large chain family. Type I subfamily. As to quaternary structure, heterohexadecamer of 8 large chains and 8 small chains; disulfide-linked. The disulfide link is formed within the large subunit homodimers. Mg(2+) is required as a cofactor. Post-translationally, the disulfide bond which can form in the large chain dimeric partners within the hexadecamer appears to be associated with oxidative stress and protein turnover.

It localises to the plastid. The protein localises to the chloroplast. It carries out the reaction 2 (2R)-3-phosphoglycerate + 2 H(+) = D-ribulose 1,5-bisphosphate + CO2 + H2O. It catalyses the reaction D-ribulose 1,5-bisphosphate + O2 = 2-phosphoglycolate + (2R)-3-phosphoglycerate + 2 H(+). In terms of biological role, ruBisCO catalyzes two reactions: the carboxylation of D-ribulose 1,5-bisphosphate, the primary event in carbon dioxide fixation, as well as the oxidative fragmentation of the pentose substrate in the photorespiration process. Both reactions occur simultaneously and in competition at the same active site. The protein is Ribulose bisphosphate carboxylase large chain of Passiflora quadrangularis (Grenadine).